The following is a 951-amino-acid chain: Coiled-coil domain-containing protein 15 (951 aa).

4 coiled-coil regions span residues 64 to 89, 154 to 193, 782 to 813, and 839 to 874; these read LIEE…QVKY, DGIE…VIKK, MDIE…EQEC, and LAQL…IQEK.

As to quaternary structure, interacts with POC5, POC1B, CETN2 and FAM161A.

The protein resides in the cytoplasm. It is found in the cytoskeleton. The protein localises to the microtubule organizing center. It localises to the centrosome. Its subcellular location is the centriole. The protein resides in the centriolar satellite. Functionally, plays an important role in primary cilium assembly, maintenance, and length regulation. Interacts with centriole inner scaffold proteins to promote proper centriole size and integrity and assembly of functional cilia. Required for the recruitment of both the inner scaffold protein POC1B and the distal SFI1/CETN2 complex to centrioles. The protein is Coiled-coil domain-containing protein 15 (CCDC15) of Homo sapiens (Human).